The following is a 194-amino-acid chain: A-type ATP synthase subunit E (194 aa).

Belongs to the V-ATPase E subunit family. Has multiple subunits with at least A(3), B(3), C, D, E, F, H, I and proteolipid K(x).

Its subcellular location is the cell membrane. Functionally, component of the A-type ATP synthase that produces ATP from ADP in the presence of a proton gradient across the membrane. In Saccharolobus solfataricus (strain ATCC 35092 / DSM 1617 / JCM 11322 / P2) (Sulfolobus solfataricus), this protein is A-type ATP synthase subunit E.